The chain runs to 163 residues: Small ribosomal subunit protein eS10A (163 aa).

The disordered stretch occupies residues Leu92–Asn163. The span at Gly105–Gly116 shows a compositional bias: gly residues.

This sequence belongs to the eukaryotic ribosomal protein eS10 family.

It is found in the cytoplasm. The sequence is that of Small ribosomal subunit protein eS10A (RpS10a) from Drosophila melanogaster (Fruit fly).